The following is a 464-amino-acid chain: Asparagine--tRNA ligase (464 aa).

It belongs to the class-II aminoacyl-tRNA synthetase family. Homodimer.

The protein resides in the cytoplasm. It catalyses the reaction tRNA(Asn) + L-asparagine + ATP = L-asparaginyl-tRNA(Asn) + AMP + diphosphate + H(+). The protein is Asparagine--tRNA ligase of Xanthomonas axonopodis pv. citri (strain 306).